The primary structure comprises 55 residues: Large ribosomal subunit protein bL33 (55 aa).

It belongs to the bacterial ribosomal protein bL33 family.

The chain is Large ribosomal subunit protein bL33 from Hamiltonella defensa subsp. Acyrthosiphon pisum (strain 5AT).